Here is a 146-residue protein sequence, read N- to C-terminus: Large ribosomal subunit protein uL15 (146 aa).

Composition is skewed to basic residues over residues 1-13 (MIRK…RMRG) and 22-38 (SKKR…GQAG). The segment at 1 to 38 (MIRKRRKITRMRGSRTVGGGCSKKRRGAGHRGGRGQAG) is disordered.

Belongs to the universal ribosomal protein uL15 family. As to quaternary structure, part of the 50S ribosomal subunit.

Its function is as follows. Binds to the 23S rRNA. The polypeptide is Large ribosomal subunit protein uL15 (Methanothermobacter thermautotrophicus (strain ATCC 29096 / DSM 1053 / JCM 10044 / NBRC 100330 / Delta H) (Methanobacterium thermoautotrophicum)).